Consider the following 456-residue polypeptide: MASFPPSLVFTVRRKEPTLVLPSKPTPRELKQLSDIDDQEGLRFQVPVIMFYKRKLSMEGEDPVKVIREALAEALAFYYPFAGRLIEGPNRKLMVDCTSEGVLFIEADADIELNQLIGDTIDPGTYLDELLHDVPGSEGILGCPLLLIQVTRFRCGGWAFAIRLNHTMSDTLGLVQFLTTIAEFTRGAEGAPSVPPVWQREFLAARQPPFIPFHHHEYEQVIDTTPDDNKKSMTHKSFFFGPKEIRAIRSHLPLHHRSTSSTFDVLTACLWRCRTCALVLDPKKTVRISCAASGRGKHDLHVPRGYYGNVSAFPATVLRAGMISTSPLEYAMEGVKKAKAKMTGEYLRSVADLMVTKGRPLYTVVGNYIVSDMTRVGLDTIDFGWGKPVYGGPARAFPLISFYGRFKDNKGEDGIVVLICLPEAAMETFQEELKKMIGEHVDGPFDYNPIKVVSKL.

Active-site proton acceptor residues include histidine 166 and aspartate 382.

The protein belongs to the plant acyltransferase family.

Functionally, involved in the biosynthesis of volatile esters which confer kiwifruit flavor. Alcohol acyl transferase that can use a wide range of alcohols as substrate to produce esters. This chain is Alcohol acyltransferase 1, found in Actinidia chinensis var. chinensis (Chinese soft-hair kiwi).